We begin with the raw amino-acid sequence, 75 residues long: Metallothionein-like protein 1 (75 aa).

The protein belongs to the metallothionein superfamily. Type 15 family.

Metallothioneins have a high content of cysteine residues that bind various heavy metals. This is Metallothionein-like protein 1 (ALI1) from Triticum aestivum (Wheat).